The sequence spans 356 residues: MRGTYCVTLWGGVFAALVAGCASERMIVAYRGAAGYVPEHTFASKVLAFAQGADYLQQDVVLSKDNQLIVAQSHILDNMTDVAEKFPRRQRADGHFYVIDFTVEELSLLRATNSFYTRGKRHTPVYGQRFPLWKPGFRLHTFEEELQFIRGLEQTTGKKIGIYSEIKVPWFHHQEGKDIAALTLALLKKYGYQSRSDLVYVQTYDFNELKRIKRELLPKYEMNVKLIQRVAYTDQRETQEKDSRGKWINYNYNWMFEPGGMQKIAKYADGVGPDWRMLIENEWSKVGAVRLSPMVSAIQDAKLECHVHTVRKETLPSYARTMDEMFSILFKQTGANVVLTDFPDLGVKFLGKPARY.

A signal peptide spans 1 to 20 (MRGTYCVTLWGGVFAALVAG). Residue cysteine 21 is the site of N-palmitoyl cysteine attachment. Cysteine 21 is lipidated: S-diacylglycerol cysteine. Residues 25–314 (RMIVAYRGAA…CHVHTVRKET (290 aa)) form the GP-PDE domain.

The protein belongs to the glycerophosphoryl diester phosphodiesterase family. In terms of processing, palmitoylated upon expression of a fusion protein with first 40 residues fused to PhoA in E.coli.

Its subcellular location is the cell inner membrane. The enzyme catalyses a sn-glycero-3-phosphodiester + H2O = an alcohol + sn-glycerol 3-phosphate + H(+). Glycerophosphoryl diester phosphodiesterase hydrolyzes deacylated phospholipids to G3P and the corresponding alcohols. In terms of biological role, binds human IgA, IgD and the Fc portion of IgG but not IgM, which may contribute to evasion of the human immune system. The sequence is that of Glycerophosphodiester phosphodiesterase (glpQ) from Treponema pallidum (strain Nichols).